A 318-amino-acid chain; its full sequence is Pyrimidine-specific ribonucleoside hydrolase RihA (318 aa).

His240 is an active-site residue.

This sequence belongs to the IUNH family. RihA subfamily.

In terms of biological role, hydrolyzes cytidine or uridine to ribose and cytosine or uracil, respectively. The chain is Pyrimidine-specific ribonucleoside hydrolase RihA from Shewanella sp. (strain MR-7).